Here is a 435-residue protein sequence, read N- to C-terminus: Zinc finger CCCH domain-containing protein 16 (435 aa).

A C3H1-type zinc finger spans residues 1-27 (MRKELCRNFQRGSCRYGENCRFLHPQQ). Positions 2–88 (RKELCRNFQR…ASTPTGGGAA (87 aa)) are 6 X 2 AA repeats of F-G. Disordered regions lie at residues 25–105 (PQQA…DHKC) and 205–374 (TPSI…SQNN). A run of 2 repeats spans residues 34–35 (FG) and 36–37 (FG). Positions 39–51 (QNQQQQQQQQQQN) are enriched in low complexity. 2 consecutive repeat copies span residues 56–57 (FG) and 58–59 (FG). Polar residues predominate over residues 63-77 (GGSSRPNQFQNTWSR). The span at 78 to 99 (TASTPTGGGAAASTQQTGKQTQ) shows a compositional bias: low complexity. 2 stretches are compositionally biased toward polar residues: residues 205–320 (TPSI…VNTP) and 328–339 (SGFQTNPSTTFK). 2 repeat units span residues 343 to 344 (FG) and 359 to 360 (FG). The span at 351 to 374 (TTPQNNNIFGQSTPTPATNTSQNN) shows a compositional bias: polar residues.

In terms of assembly, part of the nuclear pore complex (NPC). The NPC has an eight-fold symmetrical structure comprising a central transport channel and two rings, the cytoplasmic and nuclear rings, to which eight filaments are attached. The cytoplasmic filaments have loose ends, while the nuclear filaments are joined in a distal ring, forming a nuclear basket. NPCs are highly dynamic in configuration and composition, and can be devided in 3 subcomplexes, the NUP62 subcomplex, the NUP107-160 subcomplex and the NUP93 subcomplex, containing approximately 30 different nucleoporin proteins.

It is found in the nucleus envelope. Its subcellular location is the nucleus. It localises to the nuclear pore complex. The chain is Zinc finger CCCH domain-containing protein 16 from Arabidopsis thaliana (Mouse-ear cress).